Consider the following 122-residue polypeptide: UPF0102 protein xcc-b100_3645 (122 aa).

Belongs to the UPF0102 family.

The polypeptide is UPF0102 protein xcc-b100_3645 (Xanthomonas campestris pv. campestris (strain B100)).